Here is a 141-residue protein sequence, read N- to C-terminus: Cystatin (141 aa).

A signal peptide spans 1-26 (MVHFQLPVAAPLCLLCALLLLPSATM). In terms of domain architecture, Cystatin spans 29–129 (GGLSPRSVSD…CHFQVWSRPW (101 aa)). The Secondary area of contact motif lies at 73–77 (QVVAG). 2 cysteine pairs are disulfide-bonded: Cys-91–Cys-107 and Cys-120–Cys-140.

This sequence belongs to the cystatin family. As to expression, expressed at a low level by the venom gland (at protein level).

It localises to the secreted. Its function is as follows. Inhibits various C1 cysteine proteases including cathepsin L, papain and cathepsin B. This protein has no toxic activity and its function in the venom is unknown. It may play a role as a housekeeping or regulatory protein. The polypeptide is Cystatin (Naja kaouthia (Monocled cobra)).